Reading from the N-terminus, the 137-residue chain is Peptide methionine sulfoxide reductase MsrB (137 aa).

Positions 7–129 (AEELKKKLSE…NSASLAFSDE (123 aa)) constitute a MsrB domain. Zn(2+) is bound by residues Cys-46, Cys-49, Cys-95, and Cys-98. The active-site Nucleophile is Cys-118.

The protein belongs to the MsrB Met sulfoxide reductase family. It depends on Zn(2+) as a cofactor.

It carries out the reaction L-methionyl-[protein] + [thioredoxin]-disulfide + H2O = L-methionyl-(R)-S-oxide-[protein] + [thioredoxin]-dithiol. The sequence is that of Peptide methionine sulfoxide reductase MsrB from Salmonella agona (strain SL483).